We begin with the raw amino-acid sequence, 331 residues long: tRNA-cytidine(32) 2-sulfurtransferase (331 aa).

The interval 1-31 (MNAPHMNDTTADAATLDATAAPAGRPALTRR) is disordered. Over residues 8–23 (DTTADAATLDATAAPA) the composition is skewed to low complexity. The PP-loop motif motif lies at 71 to 76 (SGGKDS). Residues Cys146, Cys149, and Cys237 each contribute to the [4Fe-4S] cluster site.

Belongs to the TtcA family. In terms of assembly, homodimer. Mg(2+) is required as a cofactor. It depends on [4Fe-4S] cluster as a cofactor.

It localises to the cytoplasm. The catalysed reaction is cytidine(32) in tRNA + S-sulfanyl-L-cysteinyl-[cysteine desulfurase] + AH2 + ATP = 2-thiocytidine(32) in tRNA + L-cysteinyl-[cysteine desulfurase] + A + AMP + diphosphate + H(+). Its pathway is tRNA modification. Functionally, catalyzes the ATP-dependent 2-thiolation of cytidine in position 32 of tRNA, to form 2-thiocytidine (s(2)C32). The sulfur atoms are provided by the cysteine/cysteine desulfurase (IscS) system. In Burkholderia lata (strain ATCC 17760 / DSM 23089 / LMG 22485 / NCIMB 9086 / R18194 / 383), this protein is tRNA-cytidine(32) 2-sulfurtransferase.